Reading from the N-terminus, the 190-residue chain is Orotate phosphoribosyltransferase (190 aa).

Residues arginine 101, lysine 102, lysine 105, histidine 107, and 128 to 136 (EDVVTTGGS) each bind 5-phospho-alpha-D-ribose 1-diphosphate. Orotate-binding residues include threonine 132 and arginine 160.

Belongs to the purine/pyrimidine phosphoribosyltransferase family. PyrE subfamily. As to quaternary structure, homodimer. Mg(2+) serves as cofactor.

It carries out the reaction orotidine 5'-phosphate + diphosphate = orotate + 5-phospho-alpha-D-ribose 1-diphosphate. It participates in pyrimidine metabolism; UMP biosynthesis via de novo pathway; UMP from orotate: step 1/2. Functionally, catalyzes the transfer of a ribosyl phosphate group from 5-phosphoribose 1-diphosphate to orotate, leading to the formation of orotidine monophosphate (OMP). This is Orotate phosphoribosyltransferase from Synechococcus sp. (strain CC9605).